A 633-amino-acid polypeptide reads, in one-letter code: tRNA uridine 5-carboxymethylaminomethyl modification enzyme MnmG (633 aa).

18–23 lines the FAD pocket; sequence GAGHAG. Residues 208 to 232 are disordered; sequence PRVNGNTIDFDKTEEQPGDKTPNHF. Residues 216–229 are compositionally biased toward basic and acidic residues; it reads DFDKTEEQPGDKTP. 279–293 is a binding site for NAD(+); the sequence is GPRYCPSIEDKIVRF.

The protein belongs to the MnmG family. As to quaternary structure, homodimer. Heterotetramer of two MnmE and two MnmG subunits. The cofactor is FAD.

Its subcellular location is the cytoplasm. NAD-binding protein involved in the addition of a carboxymethylaminomethyl (cmnm) group at the wobble position (U34) of certain tRNAs, forming tRNA-cmnm(5)s(2)U34. The sequence is that of tRNA uridine 5-carboxymethylaminomethyl modification enzyme MnmG from Lacticaseibacillus paracasei (strain ATCC 334 / BCRC 17002 / CCUG 31169 / CIP 107868 / KCTC 3260 / NRRL B-441) (Lactobacillus paracasei).